Reading from the N-terminus, the 380-residue chain is UDP-N-acetylglucosamine--N-acetylmuramyl-(pentapeptide) pyrophosphoryl-undecaprenol N-acetylglucosamine transferase (380 aa).

Residues 23-25 (TGG), asparagine 137, arginine 178, serine 210, isoleucine 266, and glutamine 311 contribute to the UDP-N-acetyl-alpha-D-glucosamine site.

Belongs to the glycosyltransferase 28 family. MurG subfamily.

It is found in the cell inner membrane. It carries out the reaction di-trans,octa-cis-undecaprenyl diphospho-N-acetyl-alpha-D-muramoyl-L-alanyl-D-glutamyl-meso-2,6-diaminopimeloyl-D-alanyl-D-alanine + UDP-N-acetyl-alpha-D-glucosamine = di-trans,octa-cis-undecaprenyl diphospho-[N-acetyl-alpha-D-glucosaminyl-(1-&gt;4)]-N-acetyl-alpha-D-muramoyl-L-alanyl-D-glutamyl-meso-2,6-diaminopimeloyl-D-alanyl-D-alanine + UDP + H(+). Its pathway is cell wall biogenesis; peptidoglycan biosynthesis. In terms of biological role, cell wall formation. Catalyzes the transfer of a GlcNAc subunit on undecaprenyl-pyrophosphoryl-MurNAc-pentapeptide (lipid intermediate I) to form undecaprenyl-pyrophosphoryl-MurNAc-(pentapeptide)GlcNAc (lipid intermediate II). The polypeptide is UDP-N-acetylglucosamine--N-acetylmuramyl-(pentapeptide) pyrophosphoryl-undecaprenol N-acetylglucosamine transferase (Bacteroides fragilis (strain ATCC 25285 / DSM 2151 / CCUG 4856 / JCM 11019 / LMG 10263 / NCTC 9343 / Onslow / VPI 2553 / EN-2)).